Reading from the N-terminus, the 257-residue chain is Diphthine synthase (257 aa).

S-adenosyl-L-methionine contacts are provided by residues Ile-11, Asp-89, Ile-92, 117-118 (SV), Leu-169, Leu-210, and His-235.

Belongs to the diphthine synthase family. Homodimer.

The catalysed reaction is 2-[(3S)-amino-3-carboxypropyl]-L-histidyl-[translation elongation factor 2] + 3 S-adenosyl-L-methionine = diphthine-[translation elongation factor 2] + 3 S-adenosyl-L-homocysteine + 3 H(+). The protein operates within protein modification; peptidyl-diphthamide biosynthesis. In terms of biological role, S-adenosyl-L-methionine-dependent methyltransferase that catalyzes the trimethylation of the amino group of the modified target histidine residue in translation elongation factor 2 (EF-2), to form an intermediate called diphthine. The three successive methylation reactions represent the second step of diphthamide biosynthesis. This is Diphthine synthase from Saccharolobus islandicus (strain L.S.2.15 / Lassen #1) (Sulfolobus islandicus).